Here is a 354-residue protein sequence, read N- to C-terminus: Transcription factor ATOH1 (354 aa).

A compositionally biased stretch (basic and acidic residues) spans 1-21 (MSRLLHAEEWAEVKELGDHHR). 2 disordered regions span residues 1 to 55 (MSRL…ELSL) and 91 to 122 (EAAAPRDEVDGRGELVRRSSGGASSSKSPGPV). Pro residues predominate over residues 26–38 (HHLPQPPPPPQPP). A compositionally biased stretch (basic and acidic residues) spans 94–107 (APRDEVDGRGELVR). Positions 108-122 (RSSGGASSSKSPGPV) are enriched in low complexity. The bHLH domain occupies 159–211 (QRRLAANARERRRMHGLNHAFDQLRNVIPSFNNDKKLSKYETLQMAQIYINAL). Disordered stretches follow at residues 216–277 (QTPS…TRFS) and 312–354 (SPSL…DEAS). A compositionally biased stretch (low complexity) spans 250 to 264 (NATAAGAQQASGGSQ). Positions 335–354 (HRSDGEFSPHSHYSDSDEAS) are enriched in basic and acidic residues.

Efficient DNA binding requires dimerization with another bHLH protein.

It is found in the nucleus. In terms of biological role, transcriptional regulator. Activates E box-dependent transcription in collaboration with TCF3/E47, but the activity is completely antagonized by the negative regulator of neurogenesis HES1. Plays a role in the differentiation of subsets of neural cells by activating E box-dependent transcription. This Homo sapiens (Human) protein is Transcription factor ATOH1.